Consider the following 241-residue polypeptide: Methylthioribulose-1-phosphate dehydratase (241 aa).

Cys96 serves as a coordination point for substrate. The Zn(2+) site is built by His114 and His116. Glu138 acts as the Proton donor/acceptor in catalysis. Position 194 (His194) interacts with Zn(2+).

The protein belongs to the aldolase class II family. MtnB subfamily. As to quaternary structure, homotetramer. Interacts with APAF1. May interact with CASP1. Zn(2+) is required as a cofactor. Expressed in skeletal muscle (at protein level).

The protein resides in the cytoplasm. It catalyses the reaction 5-(methylsulfanyl)-D-ribulose 1-phosphate = 5-methylsulfanyl-2,3-dioxopentyl phosphate + H2O. The protein operates within amino-acid biosynthesis; L-methionine biosynthesis via salvage pathway; L-methionine from S-methyl-5-thio-alpha-D-ribose 1-phosphate: step 2/6. Functionally, catalyzes the dehydration of methylthioribulose-1-phosphate (MTRu-1-P) into 2,3-diketo-5-methylthiopentyl-1-phosphate (DK-MTP-1-P). Functions in the methionine salvage pathway, which plays a key role in cancer, apoptosis, microbial proliferation and inflammation. May inhibit the CASP1-related inflammatory response (pyroptosis), the CASP9-dependent apoptotic pathway and the cytochrome c-dependent and APAF1-mediated cell death. This is Methylthioribulose-1-phosphate dehydratase from Mus musculus (Mouse).